Here is a 124-residue protein sequence, read N- to C-terminus: Small ribosomal subunit protein uS12 (124 aa).

The tract at residues 1–30 (MPTIQQLVRKGRQDKVAKTKTAALKGSPQR) is disordered. Asp89 is subject to 3-methylthioaspartic acid. Residues 102–124 (ADTQGVKNRKQARSRYGAKKEKS) are disordered. Basic residues predominate over residues 108-118 (KNRKQARSRYG).

This sequence belongs to the universal ribosomal protein uS12 family. As to quaternary structure, part of the 30S ribosomal subunit. Contacts proteins S8 and S17. May interact with IF1 in the 30S initiation complex.

With S4 and S5 plays an important role in translational accuracy. Functionally, interacts with and stabilizes bases of the 16S rRNA that are involved in tRNA selection in the A site and with the mRNA backbone. Located at the interface of the 30S and 50S subunits, it traverses the body of the 30S subunit contacting proteins on the other side and probably holding the rRNA structure together. The combined cluster of proteins S8, S12 and S17 appears to hold together the shoulder and platform of the 30S subunit. This chain is Small ribosomal subunit protein uS12, found in Saccharopolyspora erythraea (strain ATCC 11635 / DSM 40517 / JCM 4748 / NBRC 13426 / NCIMB 8594 / NRRL 2338).